A 366-amino-acid polypeptide reads, in one-letter code: Carbamoyl phosphate synthase small chain (366 aa).

The tract at residues 1 to 170 (MLKKRYLVLE…TKSPYVSTGY (170 aa)) is CPSase. Positions 47, 221, and 223 each coordinate L-glutamine. Positions 173-360 (SVVLVDFGKK…IDMINEYKTK (188 aa)) constitute a Glutamine amidotransferase type-1 domain. Cys-248 functions as the Nucleophile in the catalytic mechanism. L-glutamine-binding residues include Leu-249, Gln-252, Asn-290, Gly-292, and Tyr-293. Residues His-333 and Glu-335 contribute to the active site.

The protein belongs to the CarA family. Composed of two chains; the small (or glutamine) chain promotes the hydrolysis of glutamine to ammonia, which is used by the large (or ammonia) chain to synthesize carbamoyl phosphate. Tetramer of heterodimers (alpha,beta)4.

It catalyses the reaction hydrogencarbonate + L-glutamine + 2 ATP + H2O = carbamoyl phosphate + L-glutamate + 2 ADP + phosphate + 2 H(+). The catalysed reaction is L-glutamine + H2O = L-glutamate + NH4(+). Its pathway is amino-acid biosynthesis; L-arginine biosynthesis; carbamoyl phosphate from bicarbonate: step 1/1. The protein operates within pyrimidine metabolism; UMP biosynthesis via de novo pathway; (S)-dihydroorotate from bicarbonate: step 1/3. In terms of biological role, small subunit of the glutamine-dependent carbamoyl phosphate synthetase (CPSase). CPSase catalyzes the formation of carbamoyl phosphate from the ammonia moiety of glutamine, carbonate, and phosphate donated by ATP, constituting the first step of 2 biosynthetic pathways, one leading to arginine and/or urea and the other to pyrimidine nucleotides. The small subunit (glutamine amidotransferase) binds and cleaves glutamine to supply the large subunit with the substrate ammonia. The protein is Carbamoyl phosphate synthase small chain of Staphylococcus saprophyticus subsp. saprophyticus (strain ATCC 15305 / DSM 20229 / NCIMB 8711 / NCTC 7292 / S-41).